The sequence spans 160 residues: Nucleotide-binding protein AHA_1129 (160 aa).

It belongs to the YajQ family.

Nucleotide-binding protein. This is Nucleotide-binding protein AHA_1129 from Aeromonas hydrophila subsp. hydrophila (strain ATCC 7966 / DSM 30187 / BCRC 13018 / CCUG 14551 / JCM 1027 / KCTC 2358 / NCIMB 9240 / NCTC 8049).